Here is a 217-residue protein sequence, read N- to C-terminus: 3,4-dihydroxy-2-butanone 4-phosphate synthase (217 aa).

D-ribulose 5-phosphate contacts are provided by residues 37–38, D42, 150–154, and E174; these read RE and RQGHT. E38 is a Mg(2+) binding site. Residue H153 participates in Mg(2+) binding.

The protein belongs to the DHBP synthase family. As to quaternary structure, homodimer. Mg(2+) serves as cofactor. The cofactor is Mn(2+).

The catalysed reaction is D-ribulose 5-phosphate = (2S)-2-hydroxy-3-oxobutyl phosphate + formate + H(+). It functions in the pathway cofactor biosynthesis; riboflavin biosynthesis; 2-hydroxy-3-oxobutyl phosphate from D-ribulose 5-phosphate: step 1/1. Catalyzes the conversion of D-ribulose 5-phosphate to formate and 3,4-dihydroxy-2-butanone 4-phosphate. The polypeptide is 3,4-dihydroxy-2-butanone 4-phosphate synthase (Desulforamulus reducens (strain ATCC BAA-1160 / DSM 100696 / MI-1) (Desulfotomaculum reducens)).